A 183-amino-acid chain; its full sequence is Type II secretion system protein H (183 aa).

Positions 1 to 5 are cleaved as a propeptide — leader sequence; the sequence is MRQRG. Phe6 carries the N-methylphenylalanine modification. A helical transmembrane segment spans residues 6–26; it reads FTVLEMMLVVLLMGSAASLVI.

In terms of assembly, type II secretion is composed of four main components: the outer membrane complex, the inner membrane complex, the cytoplasmic secretion ATPase and the periplasm-spanning pseudopilus. Interacts with core component PulG. Interacts with PulM. In terms of processing, cleaved by prepilin peptidase. Post-translationally, methylated by prepilin peptidase at the amino group of the N-terminal phenylalanine once the leader sequence is cleaved by prepilin peptidase.

It localises to the cell inner membrane. Component of the type II secretion system required for the energy-dependent secretion of extracellular factors such as proteases and toxins from the periplasm. Part of the pseudopilus tip complex that is critical for the recognition and binding of secretion substrates. The sequence is that of Type II secretion system protein H (pulH) from Klebsiella michiganensis (strain ATCC 8724 / DSM 4798 / JCM 20051 / NBRC 3318 / NRRL B-199 / KCTC 1686 / BUCSAV 143 / CCM 1901).